The sequence spans 607 residues: Matrix metalloproteinase-16 (607 aa).

Residues 1–31 (MILLTFSTGRRLDFVHHSGVFFLQTLLWILC) form the signal peptide. Residues 32 to 119 (ATVCGTEQYF…SSKFHIRRKR (88 aa)) constitute a propeptide that is removed on maturation. N-linked (GlcNAc...) asparagine glycosylation occurs at N83. The Cysteine switch signature appears at 99 to 106 (PRCGVPDQ). C101 contacts Zn(2+). Over 120 to 564 (YALTGQKWQH…LDNTASTVKA (445 aa)) the chain is Extracellular. Residue D183 coordinates Ca(2+). Residues H193 and D195 each contribute to the Zn(2+) site. Ca(2+) is bound by residues D200, G201, G203, and F205. H208 is a binding site for Zn(2+). 3 residues coordinate Ca(2+): G215, G217, and D219. Residue H221 coordinates Zn(2+). Residues D223 and E226 each coordinate Ca(2+). Zn(2+) is bound at residue H246. Residue E247 is part of the active site. Residues H250 and H256 each contribute to the Zn(2+) site. The tract at residues 281–340 (DDLQGIQKIYGPPDKIPPPTRPLPTVPPHRSIPPADPRKNDRPKPPRPPTGRPSYPGAKP) is disordered. The segment covering 294–315 (DKIPPPTRPLPTVPPHRSIPPA) has biased composition (pro residues). Hemopexin repeat units follow at residues 340-388 (PNIC…WRGL), 389-434 (PPSI…GSGI), 436-484 (PHGI…KGIP), and 485-532 (ESPQ…FMGC). A disulfide bridge connects residues C343 and C532. The helical transmembrane segment at 565-585 (IAIVIPCILALCLLVLVYTVF) threads the bilayer. At 586–607 (QFKRKGTPRHILYCKRSMQEWV) the chain is on the cytoplasmic side.

This sequence belongs to the peptidase M10A family. In terms of assembly, interacts with CSPG4 through CSPG4 chondroitin sulfate glycosaminoglycan. Zn(2+) serves as cofactor. It depends on Ca(2+) as a cofactor. In terms of processing, the precursor is cleaved by a furin endopeptidase. In terms of tissue distribution, expressed in heart, brain, placenta, ovary and small intestine. Isoform Short is found in the ovary.

Its subcellular location is the cell membrane. It is found in the secreted. The protein resides in the extracellular space. The protein localises to the extracellular matrix. It localises to the cell surface. With respect to regulation, TIMP-2 shows little inhibitory activity compared to TIMP-1. TIMP-1 seems to have less binding affinity than TIMP-2 for the short isoform. In terms of biological role, endopeptidase that degrades various components of the extracellular matrix, such as collagen type III and fibronectin. Activates progelatinase A. Involved in the matrix remodeling of blood vessels. Isoform short cleaves fibronectin and also collagen type III, but at lower rate. It has no effect on type I, II, IV and V collagen. However, upon interaction with CSPG4, it may be involved in degradation and invasion of type I collagen by melanoma cells. This chain is Matrix metalloproteinase-16, found in Homo sapiens (Human).